The chain runs to 180 residues: ATP synthase subunit delta (180 aa).

It belongs to the ATPase delta chain family. In terms of assembly, F-type ATPases have 2 components, F(1) - the catalytic core - and F(0) - the membrane proton channel. F(1) has five subunits: alpha(3), beta(3), gamma(1), delta(1), epsilon(1). F(0) has three main subunits: a(1), b(2) and c(10-14). The alpha and beta chains form an alternating ring which encloses part of the gamma chain. F(1) is attached to F(0) by a central stalk formed by the gamma and epsilon chains, while a peripheral stalk is formed by the delta and b chains.

It localises to the cell inner membrane. Functionally, f(1)F(0) ATP synthase produces ATP from ADP in the presence of a proton or sodium gradient. F-type ATPases consist of two structural domains, F(1) containing the extramembraneous catalytic core and F(0) containing the membrane proton channel, linked together by a central stalk and a peripheral stalk. During catalysis, ATP synthesis in the catalytic domain of F(1) is coupled via a rotary mechanism of the central stalk subunits to proton translocation. This protein is part of the stalk that links CF(0) to CF(1). It either transmits conformational changes from CF(0) to CF(1) or is implicated in proton conduction. This is ATP synthase subunit delta from Paracidovorax citrulli (strain AAC00-1) (Acidovorax citrulli).